The sequence spans 967 residues: Alanine--tRNA ligase, cytoplasmic (967 aa).

4 residues coordinate Zn(2+): His605, His609, Cys724, and His728.

The protein belongs to the class-II aminoacyl-tRNA synthetase family. As to quaternary structure, monomer. Zn(2+) serves as cofactor. The N-terminus is blocked.

The protein localises to the cytoplasm. It carries out the reaction tRNA(Ala) + L-alanine + ATP = L-alanyl-tRNA(Ala) + AMP + diphosphate. Its function is as follows. Catalyzes the attachment of alanine to tRNA(Ala) in a two-step reaction: alanine is first activated by ATP to form Ala-AMP and then transferred to the acceptor end of tRNA(Ala). Also edits incorrectly charged tRNA(Ala) via its editing domain. This chain is Alanine--tRNA ligase, cytoplasmic, found in Bombyx mori (Silk moth).